We begin with the raw amino-acid sequence, 387 residues long: uncharacterized protein (387 aa).

It localises to the mitochondrion. This is an uncharacterized protein from Paramecium tetraurelia.